Here is a 171-residue protein sequence, read N- to C-terminus: Endoribonuclease YbeY (171 aa).

Zn(2+) contacts are provided by His-115, His-119, and His-125.

This sequence belongs to the endoribonuclease YbeY family. It depends on Zn(2+) as a cofactor.

It is found in the cytoplasm. Single strand-specific metallo-endoribonuclease involved in late-stage 70S ribosome quality control and in maturation of the 3' terminus of the 16S rRNA. This chain is Endoribonuclease YbeY, found in Tropheryma whipplei (strain TW08/27) (Whipple's bacillus).